An 88-amino-acid chain; its full sequence is Small ribosomal subunit protein bS20 (88 aa).

Disordered stretches follow at residues 1-29 (MANT…SKLR) and 69-88 (KNTA…AMAA).

Belongs to the bacterial ribosomal protein bS20 family.

Binds directly to 16S ribosomal RNA. The polypeptide is Small ribosomal subunit protein bS20 (Polynucleobacter asymbioticus (strain DSM 18221 / CIP 109841 / QLW-P1DMWA-1) (Polynucleobacter necessarius subsp. asymbioticus)).